The sequence spans 501 residues: Aspartate--tRNA ligase, cytoplasmic (501 aa).

A Phosphothreonine modification is found at T52. K74 is subject to N6-acetyllysine. E229 contacts L-aspartate. Residue S249 is modified to Phosphoserine. Residues 251–254 are aspartate; that stretch reads QLYK. R273 contacts L-aspartate. ATP is bound by residues 273–275 and 281–283; these read RAE and RHL. K374 carries the N6-acetyllysine modification. Residues 411–415 form a binding site for the 3'-end of tRNA region; it reads KQSNS. E424 serves as a coordination point for ATP. Residues S427 and R431 each coordinate L-aspartate. An ATP-binding site is contributed by 472 to 475; that stretch reads GLER. A Phosphothreonine; by PKA modification is found at T500.

The protein belongs to the class-II aminoacyl-tRNA synthetase family. Type 2 subfamily. In terms of assembly, homodimer. Part of a multisubunit complex that groups tRNA ligases for Arg (RARS1), Asp (DARS1), Gln (QARS1), Ile (IARS1), Leu (LARS1), Lys (KARS1), Met (MARS1) the bifunctional ligase for Glu and Pro (EPRS1) and the auxiliary subunits AIMP1/p43, AIMP2/p38 and EEF1E1/p18.

The protein localises to the cytoplasm. It carries out the reaction tRNA(Asp) + L-aspartate + ATP = L-aspartyl-tRNA(Asp) + AMP + diphosphate. Catalyzes the specific attachment of an amino acid to its cognate tRNA in a 2 step reaction: the amino acid (AA) is first activated by ATP to form AA-AMP and then transferred to the acceptor end of the tRNA. The polypeptide is Aspartate--tRNA ligase, cytoplasmic (DARS1) (Bos taurus (Bovine)).